We begin with the raw amino-acid sequence, 264 residues long: MIQYHDLLERILSDGTEKHDRTGTGTLSVFGHQMRFNLAAGFPMLTTKRLPLKAIVHELLWFLQGDTNIKYLRDNGVTIWDEWADANGDLGPVYGAQWRSWPAADGRSIDQIANIVEMIKRNPDSRRLIVTAWNPADVDRMALPPCHCLFQFYVAGGKLSCQLYQRSADVFLGVPFNIASYALLTMMIAQVTGLKPGEFIHTLGDAHLYSNHLEQARLQLTRAPRALPEMVIDPAVKDVFGFRYEDFTLQGYDPHPHIKAEVAV.

Residues arginine 21 and 126 to 127 (RR) contribute to the dUMP site. The Nucleophile role is filled by cysteine 146. Residues 166–169 (RSAD), asparagine 177, and 207–209 (HLY) each bind dUMP. Aspartate 169 provides a ligand contact to (6R)-5,10-methylene-5,6,7,8-tetrahydrofolate. Position 263 (alanine 263) interacts with (6R)-5,10-methylene-5,6,7,8-tetrahydrofolate.

Belongs to the thymidylate synthase family. Bacterial-type ThyA subfamily. As to quaternary structure, homodimer.

It is found in the cytoplasm. It carries out the reaction dUMP + (6R)-5,10-methylene-5,6,7,8-tetrahydrofolate = 7,8-dihydrofolate + dTMP. Its pathway is pyrimidine metabolism; dTTP biosynthesis. Catalyzes the reductive methylation of 2'-deoxyuridine-5'-monophosphate (dUMP) to 2'-deoxythymidine-5'-monophosphate (dTMP) while utilizing 5,10-methylenetetrahydrofolate (mTHF) as the methyl donor and reductant in the reaction, yielding dihydrofolate (DHF) as a by-product. This enzymatic reaction provides an intracellular de novo source of dTMP, an essential precursor for DNA biosynthesis. In Rhodopseudomonas palustris (strain BisB5), this protein is Thymidylate synthase.